Consider the following 119-residue polypeptide: Odin profilin (119 aa).

Belongs to the Asgard profilin family.

The protein localises to the cytoplasm. The protein resides in the cytoskeleton. With respect to regulation, inhibition of rabbit actin polymerization is reduced by phosphatidylinositol-(4,5)-P2(1,2-dipalmitoyl), a soluble form of the phospholipid phosphatidylinositol, suggesting an unknown lipid might regulate actin-profilin interaction in vivo. Its function is as follows. Binds to actin and affects the structure of the cytoskeleton. At high concentrations inhibits spontaneous rabbit actin nucleation. This strongly suggests this archaea has a profilin-regulated actin system, and actin-type genes can be identified in this organism. In Odinarchaeota yellowstonii (strain LCB_4), this protein is Odin profilin.